A 259-amino-acid chain; its full sequence is DNA-directed RNA polymerase subunit Rpo3 (259 aa).

It belongs to the archaeal Rpo3/eukaryotic RPB3 RNA polymerase subunit family. Part of the RNA polymerase complex.

The protein resides in the cytoplasm. The enzyme catalyses RNA(n) + a ribonucleoside 5'-triphosphate = RNA(n+1) + diphosphate. In terms of biological role, DNA-dependent RNA polymerase (RNAP) catalyzes the transcription of DNA into RNA using the four ribonucleoside triphosphates as substrates. This chain is DNA-directed RNA polymerase subunit Rpo3, found in Pyrococcus horikoshii (strain ATCC 700860 / DSM 12428 / JCM 9974 / NBRC 100139 / OT-3).